We begin with the raw amino-acid sequence, 181 residues long: Diphosphoinositol polyphosphate phosphohydrolase NUDT4B (181 aa).

Residues Arg10, 18 to 20 (KKR), and 39 to 41 (SSR) contribute to the substrate site. The region spanning 18–145 (KKRAACLCFR…VHAEYLEKLK (128 aa)) is the Nudix hydrolase domain. Mg(2+)-binding residues include Gly50 and Glu66. Residues 51–72 (GGMEPEEEPGGAAVREVYEEAG) carry the Nudix box motif. Glu69 functions as the Proton acceptor in the catalytic mechanism. Glu70 serves as a coordination point for Mg(2+). Residues 90–92 (RKH), Arg116, and Lys134 each bind substrate.

This sequence belongs to the Nudix hydrolase family. DIPP subfamily. Mg(2+) serves as cofactor. Requires Mn(2+) as cofactor.

The protein localises to the cytoplasm. The enzyme catalyses diphospho-myo-inositol polyphosphate + H2O = myo-inositol polyphosphate + phosphate.. In terms of biological role, cleaves a beta-phosphate from the diphosphate groups in PP-InsP5 (diphosphoinositol pentakisphosphate), PP-InsP4 and [PP]2-InsP4 (bisdiphosphoinositol tetrakisphosphate), suggesting that it may play a role in signal transduction. Also able to catalyze the hydrolysis of dinucleoside oligophosphate Ap6A, but not Ap5A. The major reaction products are ADP and p4a from Ap6A. Also able to hydrolyze 5-phosphoribose 1-diphosphate. Does not play a role in U8 snoRNA decapping activity. Binds U8 snoRNA. The chain is Diphosphoinositol polyphosphate phosphohydrolase NUDT4B from Homo sapiens (Human).